We begin with the raw amino-acid sequence, 251 residues long: tRNA1(Val) (adenine(37)-N6)-methyltransferase (251 aa).

It belongs to the methyltransferase superfamily. tRNA (adenine-N(6)-)-methyltransferase family.

It localises to the cytoplasm. The catalysed reaction is adenosine(37) in tRNA1(Val) + S-adenosyl-L-methionine = N(6)-methyladenosine(37) in tRNA1(Val) + S-adenosyl-L-homocysteine + H(+). Its function is as follows. Specifically methylates the adenine in position 37 of tRNA(1)(Val) (anticodon cmo5UAC). The chain is tRNA1(Val) (adenine(37)-N6)-methyltransferase from Yersinia enterocolitica serotype O:8 / biotype 1B (strain NCTC 13174 / 8081).